The following is a 108-amino-acid chain: Phosphoribosyl-AMP cyclohydrolase (108 aa).

D78 contributes to the Mg(2+) binding site. C79 provides a ligand contact to Zn(2+). Positions 80 and 82 each coordinate Mg(2+). Zn(2+)-binding residues include C95 and C102.

Belongs to the PRA-CH family. In terms of assembly, homodimer. Mg(2+) serves as cofactor. The cofactor is Zn(2+).

It is found in the cytoplasm. It catalyses the reaction 1-(5-phospho-beta-D-ribosyl)-5'-AMP + H2O = 1-(5-phospho-beta-D-ribosyl)-5-[(5-phospho-beta-D-ribosylamino)methylideneamino]imidazole-4-carboxamide. It functions in the pathway amino-acid biosynthesis; L-histidine biosynthesis; L-histidine from 5-phospho-alpha-D-ribose 1-diphosphate: step 3/9. Its function is as follows. Catalyzes the hydrolysis of the adenine ring of phosphoribosyl-AMP. The chain is Phosphoribosyl-AMP cyclohydrolase from Nitrosopumilus maritimus (strain SCM1).